We begin with the raw amino-acid sequence, 273 residues long: Formamidopyrimidine-DNA glycosylase (273 aa).

Proline 2 functions as the Schiff-base intermediate with DNA in the catalytic mechanism. Glutamate 3 (proton donor) is an active-site residue. Lysine 58 (proton donor; for beta-elimination activity) is an active-site residue. 3 residues coordinate DNA: histidine 91, arginine 110, and arginine 153. The FPG-type zinc-finger motif lies at 238–272 (KVYGKEGQPCPRCGEDFVKIKISGRGTTYCLHCQK). Arginine 262 functions as the Proton donor; for delta-elimination activity in the catalytic mechanism.

The protein belongs to the FPG family. As to quaternary structure, monomer. Zn(2+) serves as cofactor.

The catalysed reaction is Hydrolysis of DNA containing ring-opened 7-methylguanine residues, releasing 2,6-diamino-4-hydroxy-5-(N-methyl)formamidopyrimidine.. The enzyme catalyses 2'-deoxyribonucleotide-(2'-deoxyribose 5'-phosphate)-2'-deoxyribonucleotide-DNA = a 3'-end 2'-deoxyribonucleotide-(2,3-dehydro-2,3-deoxyribose 5'-phosphate)-DNA + a 5'-end 5'-phospho-2'-deoxyribonucleoside-DNA + H(+). Its function is as follows. Involved in base excision repair of DNA damaged by oxidation or by mutagenic agents. Acts as a DNA glycosylase that recognizes and removes damaged bases. Has a preference for oxidized purines, such as 7,8-dihydro-8-oxoguanine (8-oxoG). Has AP (apurinic/apyrimidinic) lyase activity and introduces nicks in the DNA strand. Cleaves the DNA backbone by beta-delta elimination to generate a single-strand break at the site of the removed base with both 3'- and 5'-phosphates. The chain is Formamidopyrimidine-DNA glycosylase from Lactobacillus delbrueckii subsp. bulgaricus (strain ATCC 11842 / DSM 20081 / BCRC 10696 / JCM 1002 / NBRC 13953 / NCIMB 11778 / NCTC 12712 / WDCM 00102 / Lb 14).